We begin with the raw amino-acid sequence, 685 residues long: Sodium-dependent phosphate transporter 1-B (685 aa).

6 consecutive transmembrane segments (helical) span residues 21–41, 66–86, 106–126, 162–182, 207–227, and 234–254; these read IMAPYLWMLVLGFVIAFVLAF, ACILASIFETVGSVLLGAKVS, LMAGSISAMFGSAVWQLAASF, IVLSWFISPLLSGIMSALLFF, ACTIGINLFSIMYTGAPLLGF, and GIILISVGCAVFCALFVWFFV. The disordered stretch occupies residues 489-511; the sequence is EGCIEDVVTDRKSSSSSLEERHD. Over residues 496–511 the composition is skewed to basic and acidic residues; that stretch reads VTDRKSSSSSLEERHD. The next 4 membrane-spanning stretches (helical) occupy residues 517–537, 565–585, 606–626, and 656–676; these read VSLLFQFLQILTACFGSFAHG, ATPIWLLLYGGIGICIGLWVW, FSIELASALTVVIASNVGLPI, and IFLAWFVTVPISGLISAGIMA.

Belongs to the inorganic phosphate transporter (PiT) (TC 2.A.20) family.

The protein localises to the membrane. Its function is as follows. Sodium-phosphate symporter which plays a fundamental housekeeping role in phosphate transport. This Xenopus laevis (African clawed frog) protein is Sodium-dependent phosphate transporter 1-B (slc20a1-b).